The primary structure comprises 229 residues: Uracil-DNA glycosylase (229 aa).

Asp-65 (proton acceptor) is an active-site residue.

The protein belongs to the uracil-DNA glycosylase (UDG) superfamily. UNG family.

Its subcellular location is the cytoplasm. The catalysed reaction is Hydrolyzes single-stranded DNA or mismatched double-stranded DNA and polynucleotides, releasing free uracil.. In terms of biological role, excises uracil residues from the DNA which can arise as a result of misincorporation of dUMP residues by DNA polymerase or due to deamination of cytosine. In Limosilactobacillus fermentum (strain NBRC 3956 / LMG 18251) (Lactobacillus fermentum), this protein is Uracil-DNA glycosylase.